The primary structure comprises 247 residues: Adenosylcobinamide-GDP ribazoletransferase (247 aa).

The next 5 membrane-spanning stretches (helical) occupy residues 34-54 (IITF…VFMV), 59-79 (CGVP…TGGF), 113-133 (GGLA…ELTL), 138-158 (ILAS…LLMY), and 194-214 (VLLP…AIFI).

It belongs to the CobS family. Requires Mg(2+) as cofactor.

The protein resides in the cell inner membrane. It catalyses the reaction alpha-ribazole + adenosylcob(III)inamide-GDP = adenosylcob(III)alamin + GMP + H(+). It carries out the reaction alpha-ribazole 5'-phosphate + adenosylcob(III)inamide-GDP = adenosylcob(III)alamin 5'-phosphate + GMP + H(+). Its pathway is cofactor biosynthesis; adenosylcobalamin biosynthesis; adenosylcobalamin from cob(II)yrinate a,c-diamide: step 7/7. In terms of biological role, joins adenosylcobinamide-GDP and alpha-ribazole to generate adenosylcobalamin (Ado-cobalamin). Also synthesizes adenosylcobalamin 5'-phosphate from adenosylcobinamide-GDP and alpha-ribazole 5'-phosphate. The sequence is that of Adenosylcobinamide-GDP ribazoletransferase from Escherichia coli O127:H6 (strain E2348/69 / EPEC).